The chain runs to 237 residues: Lectin alpha chain (237 aa).

2 residues coordinate Mn(2+): glutamate 8 and aspartate 10. Ca(2+) is bound by residues aspartate 10, tyrosine 12, asparagine 14, and aspartate 19. Residue tyrosine 12 coordinates a carbohydrate. Mn(2+) is bound by residues aspartate 19, histidine 24, and serine 34. 99-100 (LY) contacts a carbohydrate. Aspartate 208 contacts Ca(2+). Residue arginine 228 coordinates a carbohydrate.

Belongs to the leguminous lectin family. Homotetramer. In terms of processing, the beta and gamma chains are produced by partial proteolytic processing of the lectin alpha chain by an asparaginyl endopeptidase. Mixture of 60% alpha lectin and 40% of its beta and gamma proteolytic fragments.

Its function is as follows. D-mannose/D-glucose-binding lectin. Has anti-inflammatory activity in rats. Induces histamine release in mast cells from rat. Induces lymphocyte proliferation and IFNG production. Shows toxicity against the aquatic snail B.glabrata at concentrations higher than 50 ug/ml. This Dioclea grandiflora (Mucana) protein is Lectin alpha chain.